Consider the following 173-residue polypeptide: MMVSTAAVARVRPAQTNMVGAFNGCRSSVAFPATRKANNDLSTLPSSGGRVSCMQVWPPEGLKKFETLSYLPPLSVEDLAKEVDYLLRNDWVPCIEFSKEGFVYRENNASPGYYDGRYWTMWKLPMFGCTDASQVIAEVEEAKKAYPEYFVRIIGFDNKRQVQCISFIAYKPT.

The transit peptide at 1–52 (MMVSTAAVARVRPAQTNMVGAFNGCRSSVAFPATRKANNDLSTLPSSGGRVS) directs the protein to the chloroplast.

The protein belongs to the RuBisCO small chain family. Heterohexadecamer of 8 large and 8 small subunits.

The protein resides in the plastid. The protein localises to the chloroplast. RuBisCO catalyzes two reactions: the carboxylation of D-ribulose 1,5-bisphosphate, the primary event in carbon dioxide fixation, as well as the oxidative fragmentation of the pentose substrate. Both reactions occur simultaneously and in competition at the same active site. Although the small subunit is not catalytic it is essential for maximal activity. This is Ribulose bisphosphate carboxylase small subunit, chloroplastic 1 from Lemna gibba (Swollen duckweed).